A 57-amino-acid polypeptide reads, in one-letter code: Potassium channel toxin alpha-KTx 4.2 (57 aa).

The first 20 residues, 1 to 20 (MKVLYGILIIFILCSMFYLS), serve as a signal peptide directing secretion. A propeptide spans 21 to 22 (QE) (removed by a carboxypeptidase). 3 disulfide bridges follow: cysteine 29–cysteine 50, cysteine 35–cysteine 55, and cysteine 39–cysteine 57.

The protein belongs to the short scorpion toxin superfamily. Potassium channel inhibitor family. Alpha-KTx 04 subfamily. As to expression, expressed by the venom gland.

The protein localises to the secreted. Blocker for small-conductance calcium-activated potassium channels KCa2.2/KCNN2 (Kd=80 nM) and KCa2.3/KCNN3 (Kd=197 nM) and ERG1/Kv11.1/KCNH2 potassium channels (53% inhibition at 5 uM). Has also been shown to inhibit Kv1.1/KCNA1 and Nav1.7/SCN9A with a moderate potency, as well as Kv11.1/KCNH2/ERG1 and Kv1.2/KCNA2 with a low potency. This is Potassium channel toxin alpha-KTx 4.2 from Tityus serrulatus (Brazilian scorpion).